The primary structure comprises 646 residues: Ribonuclease Y (646 aa).

A helical transmembrane segment spans residues 4-24 (VLVVLLSLVLVVLSVLILAVA). Disordered regions lie at residues 43 to 62 (PRTPAARGVGDVTGPADFDE) and 69 to 118 (LPAP…HGGS). The KH domain maps to 336-402 (VVTVLHLPGD…RITLAALVSD (67 aa)). Residues 462-555 (VLAHLIESAH…TQAADQISGG (94 aa)) enclose the HD domain.

This sequence belongs to the RNase Y family.

The protein resides in the cell membrane. Functionally, endoribonuclease that initiates mRNA decay. The chain is Ribonuclease Y from Frankia casuarinae (strain DSM 45818 / CECT 9043 / HFP020203 / CcI3).